Here is a 438-residue protein sequence, read N- to C-terminus: MEITVIASSSIDEGIGSWDLKTGTEQLQFKPCASPAHGLTAVGEKFLASSQLSARNTSGSIFYWSWTKPQAEVKSYPVEPIKALAANNEGTYLVGGGISGDIYLWEVATGKLLKKWHGHYRSVTCLVFSGDDSLLVSGSQDGSIRVWSLIRLFDDFQRQQGNTLYEHNFNEHTMSVTDIVIDYGGCNAVIISSSEDRTCKVWSLSRGKLLKNIIFPSVINALALDPGGCVFYAGARDSKIYIGAINATSEYGTQVLGSVSEKGKAITCLAYCADGNLLISGSEDGVVCVWDPKSLRHVRTLIHAKGSRKGPVNNIQIVRKTIVANSNKTQVSWKSRGALIPPPLEKYERPVEDTMDGIVTVDPPPFSDVPVYSSFLSADLIDEQVKELQQQGSAATEMEMERLKLEYKRSLQMNEQWQKNYENLLQVVMEEEQIGGTN.

WD repeat units lie at residues 36-74 (AHGL…AEVK), 76-115 (YPVE…LLKK), 118-157 (GHYR…DDFQ), 171-212 (EHTM…LLKN), 214-253 (IFPS…EYGT), and 261-300 (EKGK…HVRT). Positions 394-434 (AATEMEMERLKLEYKRSLQMNEQWQKNYENLLQVVMEEEQI) form a coiled coil.

Its function is as follows. Involved in meristem development. Acts as a negative regulator of the CUC-STM pathway in shoot apical meristem (SAM) neo-formation. The sequence is that of Protein ROOT INITIATION DEFECTIVE 3 (RID3) from Arabidopsis thaliana (Mouse-ear cress).